Consider the following 1448-residue polypeptide: DNA-directed RNA polymerase subunit beta' (1448 aa).

4 residues coordinate Zn(2+): Cys66, Cys68, Cys81, and Cys84. Residues Asp474, Asp476, and Asp478 each coordinate Mg(2+). Residues Cys814, Cys888, Cys895, and Cys898 each coordinate Zn(2+). The segment at 1408-1448 (LEELQAAIGGDGESPSGDGAAGDGAPSEEDVEQIEASGSEN) is disordered.

This sequence belongs to the RNA polymerase beta' chain family. As to quaternary structure, the RNAP catalytic core consists of 2 alpha, 1 beta, 1 beta' and 1 omega subunit. When a sigma factor is associated with the core the holoenzyme is formed, which can initiate transcription. Mg(2+) serves as cofactor. Requires Zn(2+) as cofactor.

The catalysed reaction is RNA(n) + a ribonucleoside 5'-triphosphate = RNA(n+1) + diphosphate. In terms of biological role, DNA-dependent RNA polymerase catalyzes the transcription of DNA into RNA using the four ribonucleoside triphosphates as substrates. This chain is DNA-directed RNA polymerase subunit beta', found in Salinibacter ruber (strain DSM 13855 / M31).